Reading from the N-terminus, the 128-residue chain is Small ribosomal subunit protein uS9 (128 aa).

The protein belongs to the universal ribosomal protein uS9 family.

This chain is Small ribosomal subunit protein uS9, found in Amoebophilus asiaticus (strain 5a2).